Reading from the N-terminus, the 2531-residue chain is Neurogenic locus notch homolog protein 1 (2531 aa).

The N-terminal stretch at 1–18 (MPRLLTPLLCLTLLPALA) is a signal peptide. At 19–1725 (ARGLRCSQPS…VEPPLPSQLH (1707 aa)) the chain is on the extracellular side. 4 EGF-like domains span residues 20 to 58 (RGLR…QRCQ), 59 to 99 (DSNP…PLCL), 102 to 139 (LDNA…KSCQ), and 140 to 176 (QADP…PTCR). 32 cysteine pairs are disulfide-bonded: Cys24-Cys37, Cys31-Cys46, Cys63-Cys74, Cys68-Cys87, Cys89-Cys98, Cys106-Cys117, Cys111-Cys127, Cys129-Cys138, Cys144-Cys155, Cys149-Cys164, Cys166-Cys175, Cys182-Cys195, Cys189-Cys204, Cys206-Cys215, Cys222-Cys233, Cys227-Cys243, Cys245-Cys254, Cys261-Cys272, Cys266-Cys281, Cys283-Cys292, Cys299-Cys312, Cys306-Cys321, Cys323-Cys332, Cys339-Cys350, Cys344-Cys359, Cys361-Cys370, Cys376-Cys387, Cys381-Cys398, Cys400-Cys409, Cys416-Cys429, Cys423-Cys438, and Cys440-Cys449. O-linked (Glc...) serine glycosylation occurs at Ser65. O-linked (Fuc...) threonine glycosylation is present at Thr73. Thr116 carries an O-linked (Fuc...) threonine glycan. The O-linked (Glc...) serine glycan is linked to Ser146. Residues 178 to 216 (DVNECSQNPGLCRHGGTCHNEIGSYRCACRATHTGPHCE) enclose the EGF-like 5; calcium-binding domain. Thr194 carries an O-linked (Fuc...) threonine glycan. Positions 218–255 (PYVPCSPSPCQNGGTCRPTGDTTHECACLPGFAGQNCE) constitute an EGF-like 6 domain. An O-linked (Fuc...) threonine; alternate glycan is attached at Thr232. O-linked (GalNAc...) threonine; alternate glycosylation is present at Thr232. One can recognise an EGF-like 7; calcium-binding domain in the interval 257–293 (NVDDCPGNNCKNGGACVDGVNTYNCRCPPEWTGQYCT). The EGF-like 8; calcium-binding domain occupies 295-333 (DVDECQLMPNACQNGGTCHNTHGGYNCVCVNGWTGEDCS). A glycan (O-linked (Fuc...) threonine) is linked at Thr311. One can recognise an EGF-like 9; calcium-binding domain in the interval 335–371 (NIDDCASAACFQGATCHDRVASFYCECPHGRTGLLCH). An O-linked (Glc...) serine glycan is attached at Ser341. Thr349 carries an O-linked (Fuc...) threonine glycan. Positions 372–410 (LNDACISNPCNEGSNCDTNPVNGKAICTCPSGYTGPACS) constitute an EGF-like 10; calcium-binding domain. A glycan (O-linked (Glc...) serine) is linked at Ser378. Positions 412-450 (DVDECALGANPCEHAGKCLNTLGSFECQCLQGYTGPRCE) constitute an EGF-like 11; calcium-binding domain. An interaction with DLL4 region spans residues 420–421 (AN). Positions 432 and 435 each coordinate Ca(2+). Residue Ser435 is glycosylated (O-linked (Glc...) serine). An interaction with DLL4 region spans residues 448 to 452 (RCEID). Ca(2+)-binding residues include Asp452, Val453, and Glu455. In terms of domain architecture, EGF-like 12; calcium-binding spans 452–488 (DVNECISNPCQNDATCLDQIGEFQCICMPGYEGVYCE). 3 cysteine pairs are disulfide-bonded: Cys456/Cys467, Cys461/Cys476, and Cys478/Cys487. Ser458 is a glycosylation site (O-linked (Glc...) serine). Thr466 carries an O-linked (Fuc...) threonine glycan. Residues Asp469 and Gln470 each contribute to the Ca(2+) site. Ca(2+)-binding residues include Asn490, Thr491, and Glu493. An EGF-like 13; calcium-binding domain is found at 490 to 526 (NTDECASSPCLHNGHCMDKINEFQCQCPKGFNGHLCQ). Intrachain disulfides connect Cys494-Cys505, Cys499-Cys514, Cys516-Cys525, Cys532-Cys543, Cys537-Cys552, Cys554-Cys563, Cys570-Cys580, Cys575-Cys589, Cys591-Cys600, Cys607-Cys618, Cys612-Cys627, Cys629-Cys638, Cys645-Cys655, Cys650-Cys664, Cys666-Cys675, Cys682-Cys693, Cys687-Cys702, Cys704-Cys713, Cys720-Cys730, Cys725-Cys739, Cys741-Cys750, Cys757-Cys768, Cys762-Cys777, Cys779-Cys788, Cys795-Cys806, Cys800-Cys815, Cys817-Cys826, Cys833-Cys844, Cys838-Cys855, Cys857-Cys866, Cys873-Cys884, Cys878-Cys893, Cys895-Cys904, Cys911-Cys922, Cys916-Cys931, Cys933-Cys942, Cys949-Cys960, Cys954-Cys969, Cys971-Cys980, Cys987-Cys998, Cys992-Cys1007, Cys1009-Cys1018, Cys1025-Cys1036, Cys1030-Cys1045, Cys1047-Cys1056, Cys1063-Cys1074, Cys1068-Cys1083, Cys1085-Cys1094, Cys1101-Cys1122, Cys1116-Cys1131, Cys1133-Cys1142, Cys1149-Cys1160, Cys1154-Cys1169, Cys1171-Cys1180, Cys1187-Cys1198, Cys1192-Cys1207, Cys1209-Cys1218, Cys1225-Cys1244, Cys1238-Cys1253, Cys1255-Cys1264, Cys1271-Cys1284, Cys1276-Cys1293, Cys1295-Cys1304, Cys1311-Cys1322, Cys1316-Cys1334, Cys1336-Cys1345, Cys1352-Cys1363, Cys1357-Cys1372, Cys1374-Cys1383, Cys1391-Cys1403, Cys1397-Cys1414, Cys1416-Cys1425, Cys1449-Cys1472, Cys1454-Cys1467, and Cys1463-Cys1479. Ser496 carries O-linked (Glc...) serine glycosylation. 2 residues coordinate Ca(2+): Asp507 and Lys508. The region spanning 528 to 564 (DVDECASTPCKNGAKCLDGPNTYTCVCTEGYTGTHCE) is the EGF-like 14; calcium-binding domain. A glycan (O-linked (Glc...) serine) is linked at Ser534. The 36-residue stretch at 566–601 (DIDECDPDPCHYGSCKDGVATFTCLCQPGYTGHHCE) folds into the EGF-like 15; calcium-binding domain. One can recognise an EGF-like 16; calcium-binding domain in the interval 603–639 (NINECHSQPCRHGGTCQDRDNSYLCLCLKGTTGPNCE). The O-linked (Glc...) serine glycan is linked to Ser609. Thr617 carries an O-linked (Fuc...) threonine glycan. Residues 641–676 (NLDDCASNPCDSGTCLDKIDGYECACEPGYTGSMCN) enclose the EGF-like 17; calcium-binding domain. O-linked (Glc...) serine glycosylation occurs at Ser647. Residues 678 to 714 (NIDECAGSPCHNGGTCEDGIAGFTCRCPEGYHDPTCL) enclose the EGF-like 18; calcium-binding domain. Residue Thr692 is glycosylated (O-linked (Fuc...) threonine). Residues 716–751 (EVNECNSNPCIHGACRDGLNGYKCDCAPGWSGTNCD) enclose the EGF-like 19; calcium-binding domain. O-linked (Glc...) serine glycosylation occurs at Ser722. Residues 753–789 (NNNECESNPCVNGGTCKDMTSGYVCTCREGFSGPNCQ) enclose the EGF-like 20; calcium-binding domain. Ser759 carries O-linked (Glc...) serine glycosylation. Thr767 is a glycosylation site (O-linked (Fuc...) threonine). Residue Ser784 is glycosylated (O-linked (GlcNAc) serine). The region spanning 791 to 827 (NINECASNPCLNQGTCIDDVAGYKCNCPLPYTGATCE) is the EGF-like 21; calcium-binding domain. Ser797 is a glycosylation site (O-linked (Glc...) serine). Thr805 carries an O-linked (Fuc...) threonine glycan. Residues 829-867 (VLAPCATSPCKNSGVCKESEDYESFSCVCPTGWQGQTCE) form the EGF-like 22 domain. One can recognise an EGF-like 23; calcium-binding domain in the interval 869-905 (DINECVKSPCRHGASCQNTNGSYRCLCQAGYTGRNCE). The N-linked (GlcNAc...) asparagine glycan is linked to Asn888. O-linked (GlcNAc) threonine glycosylation is present at Thr900. Positions 907–943 (DIDDCRPNPCHNGGSCTDGINTAFCDCLPGFQGAFCE) constitute an EGF-like 24 domain. A glycan (O-linked (Fuc) serine) is linked at Ser921. In terms of domain architecture, EGF-like 25; calcium-binding spans 945–981 (DINECASNPCQNGANCTDCVDSYTCTCPVGFNGIHCE). A glycan (O-linked (Glc...) serine) is linked at Ser951. N-linked (GlcNAc...) asparagine glycosylation is present at Asn959. The EGF-like 26 domain maps to 983-1019 (NTPDCTESSCFNGGTCVDGINSFTCLCPPGFTGSYCQ). An O-linked (Fuc...) threonine glycan is attached at Thr997. In terms of domain architecture, EGF-like 27; calcium-binding spans 1021–1057 (DVNECDSRPCLHGGTCQDSYGTYKCTCPQGYTGLNCQ). Ser1027 carries O-linked (Glc...) serine glycosylation. A glycan (O-linked (Fuc...) threonine) is linked at Thr1035. EGF-like domains lie at 1059-1095 (LVRW…VNCD) and 1097-1143 (LSVS…SYCE). A glycan (O-linked (Glc...) serine) is linked at Ser1065. One can recognise an EGF-like 30; calcium-binding domain in the interval 1145 to 1181 (EVDECSPNPCQNGATCTDYLGGFSCKCVAGYHGSNCS). A glycan (O-linked (Fuc...) threonine) is linked at Thr1159. A glycan (N-linked (GlcNAc...) asparagine) is linked at Asn1179. Positions 1183–1219 (EINECLSQPCQNGGTCIDLTNSYKCSCPRGTQGVHCE) constitute an EGF-like 31; calcium-binding domain. O-linked (Glc...) serine glycosylation occurs at Ser1189. Thr1197 is a glycosylation site (O-linked (Fuc...) threonine). The region spanning 1221–1265 (NVDDCHPPLDPASRSPKCFNNGTCVDQVGGYTCTCPPGFVGERCE) is the EGF-like 32; calcium-binding domain. Asn1241 is a glycosylation site (N-linked (GlcNAc...) asparagine). EGF-like domains lie at 1267–1305 (DVNE…RRCE), 1307–1346 (VING…ATCE), 1348–1384 (DART…PECQ), and 1387–1426 (ASSP…LLCH). Ser1273 carries an O-linked (Glc...) serine glycan. The O-linked (Fuc...) threonine glycan is linked to Thr1362. Thr1379 is a glycosylation site (O-linked (GlcNAc...) threonine). Thr1402 carries O-linked (Fuc...) threonine; alternate glycosylation. An O-linked (GalNAc...) threonine; alternate glycan is attached at Thr1402. LNR repeat units follow at residues 1449–1489 (CELP…PWKN), 1490–1531 (CTQS…CNPL), and 1532–1571 (YDQY…RLAA). Asp1457, Asn1460, Asp1475, and Asp1478 together coordinate Ca(2+). Asn1489 carries an N-linked (GlcNAc...) asparagine glycan. Disulfide bonds link Cys1490/Cys1514, Cys1496/Cys1509, Cys1505/Cys1521, Cys1536/Cys1549, and Cys1545/Cys1561. A glycan (N-linked (GlcNAc...) asparagine) is linked at Asn1587. The interaction with PSEN1 stretch occupies residues 1718 to 1750 (PPLPSQLHLMYVAAAAFVLLFFVGCGVLLSRKR). A helical membrane pass occupies residues 1726–1746 (LMYVAAAAFVLLFFVGCGVLL). Over 1747 to 2531 (SRKRRRQHGQ…QITHIPEAFK (785 aa)) the chain is Cytoplasmic. A Glycyl lysine isopeptide (Lys-Gly) (interchain with G-Cter in ubiquitin) cross-link involves residue Lys1749. The tract at residues 1770-1798 (KKKRREPLGEDSVGLKPLKNASDGALMDD) is disordered. Thr1851 is modified (phosphothreonine). 5 ANK repeats span residues 1917-1946 (TGET…DANI), 1950-1980 (MGRT…DLDA), 1984-2013 (DGTT…DVNA), 2017-2046 (LGKS…NKDM), and 2050-2079 (KEET…NRDI). The tract at residues 1937-1945 (LLEASADAN) is HIF1AN-binding. Asn1945 carries the post-translational modification (3S)-3-hydroxyasparagine; by HIF1AN; partial. The tract at residues 2004–2012 (LINSHADVN) is HIF1AN-binding. (3S)-3-hydroxyasparagine; by HIF1AN; partial is present on Asn2012. Disordered regions lie at residues 2140-2185 (KSAT…DSSS), 2382-2428 (QPQN…SLPV), and 2440-2531 (PTSL…EAFK). The segment covering 2382–2395 (QPQNLQPPSQPHLS) has biased composition (low complexity). Positions 2440 to 2478 (PTSLPSSMVPPMTTTQFLTPPSQHSYSSSPVDNTPSHQL) are enriched in polar residues. Residues 2488-2503 (PSPESPDQWSSSSPHS) are compositionally biased toward low complexity. A compositionally biased stretch (polar residues) spans 2504–2524 (NISDWSEGISSPPTTMPSQIT).

Belongs to the NOTCH family. As to quaternary structure, heterodimer of a C-terminal fragment N(TM) and an N-terminal fragment N(EC) which are probably linked by disulfide bonds. Interacts with DNER, DTX1, DTX2 and RBPJ/RBPSUH. Also interacts with MAML1, MAML2 and MAML3 which act as transcriptional coactivators for NOTCH1. Notch 1 intracellular domain interacts with SNW1; the interaction involves multimerized NOTCH1 NICD and is implicated in a formation of an intermediate preactivation complex which associates with DNA-bound CBF-1/RBPJ. The activated membrane-bound form interacts with AAK1 which promotes NOTCH1 stabilization. Forms a trimeric complex with FBXW7 and SGK1. Interacts with HIF1AN. HIF1AN negatively regulates the function of notch intracellular domain (NICD), accelerating myogenic differentiation. Interacts (via NICD) with SNAI1 (via zinc fingers); the interaction induces SNAI1 degradation via MDM2-mediated ubiquitination and inhibits SNAI1-induced cell invasion. Interacts (via NICD) with MDM2A. Interacts (via NICD) with BCL6; the interaction decreases MAML1 recruitment by NOTCH1 NICD on target genes DNA and inhibits NOTCH1 transactivation activity. Interacts with THBS4. Interacts (via the EGF-like repeat region) with CCN3 (via CTCK domain). Interacts (via EGF-like domains) with DLL4 (via N-terminal DSL and MNNL domains). Interacts with ZMIZ1. Interacts (via NICD domain) with MEGF10 (via the cytoplasmic domain). Interacts with DLL1 and JAG1. Interacts (via NICD domain) with PRAG1. Forms a complex with PRAG1, N1ICD and MAML1, in a MAML1-dependent manner. Interacts (via transmembrane region) with PSEN1; the interaction is direct. Interacts with ZFP64. Synthesized in the endoplasmic reticulum as an inactive form which is proteolytically cleaved by a furin-like convertase in the trans-Golgi network before it reaches the plasma membrane to yield an active, ligand-accessible form. Cleavage results in a C-terminal fragment N(TM) and a N-terminal fragment N(EC). Following ligand binding, it is cleaved by ADAM17 to yield a membrane-associated intermediate fragment called notch extracellular truncation (NEXT). Following endocytosis, this fragment is then cleaved by one of the catalytic subunits of gamma-secretase (PSEN1 or PSEN2) to release a Notch-derived peptide containing the intracellular domain (NICD) from the membrane. Post-translationally, phosphorylated. In terms of processing, O-linked glycosylation by GALNT11 is involved in determination of left/right symmetry: glycosylation promotes activation of NOTCH1, possibly by promoting cleavage by ADAM17, modulating the balance between motile and immotile (sensory) cilia at the left-right organiser (LRO). O-glycosylated on the EGF-like domains. O-glucosylated at Ser-435 by KDELC1 and KDELC2. Contains both O-linked fucose and O-linked glucose in the EGF-like domains 11, 12 and 13, which are interacting with the residues on DLL4. O-glycosylation at Ser-1027 is only partial. MFNG-, RFNG- and LFNG-mediated modification of O-fucose residues at specific EGF-like domains results in inhibition of its activation by JAG1 and enhancement of its activation by DLL1 via an increased binding to DLL1. Ubiquitinated. Undergoes 'Lys-29'-linked polyubiquitination by ITCH; promotes the lysosomal degradation of non-activated internalized NOTCH1. Deubiquitination by USP12 is required for transport of internalized non-activated receptor from late endosomes to lysosomes for degradation. Monoubiquitination at Lys-1749 is required for activation by gamma-secretase cleavage, it promotes interaction with AAK1, which stabilizes it. Deubiquitination by EIF3F is necessary for nuclear import of activated Notch. Post-translationally, hydroxylated at Asn-1945 and Asn-2012 by HIF1AN. Hydroxylation reduces affinity for HI1AN and may thus indirectly modulate negative regulation of NICD. As to expression, highly expressed in the brain, lung and thymus. Expressed at lower levels in the spleen, bone-marrow, spinal cord, eyes, mammary gland, liver, intestine, skeletal muscle, kidney and heart. In the hair follicle, highly expressed exclusively in the epithelial compartment.

It is found in the cell membrane. The protein resides in the late endosome membrane. Its subcellular location is the nucleus. In terms of biological role, functions as a receptor for membrane-bound ligands Jagged-1 (JAG1), Jagged-2 (JAG2) and Delta-1 (DLL1) to regulate cell-fate determination. Upon ligand activation through the released notch intracellular domain (NICD) it forms a transcriptional activator complex with RBPJ/RBPSUH and activates genes of the enhancer of split locus. Affects the implementation of differentiation, proliferation and apoptotic programs. Involved in angiogenesis; negatively regulates endothelial cell proliferation and migration and angiogenic sprouting. Involved in the maturation of both CD4(+) and CD8(+) cells in the thymus. Important for follicular differentiation and possibly cell fate selection within the follicle. During cerebellar development, functions as a receptor for neuronal DNER and is involved in the differentiation of Bergmann glia. Represses neuronal and myogenic differentiation. May play an essential role in postimplantation development, probably in some aspect of cell specification and/or differentiation. May be involved in mesoderm development, somite formation and neurogenesis. May enhance HIF1A function by sequestering HIF1AN away from HIF1A. Required for the THBS4 function in regulating protective astrogenesis from the subventricular zone (SVZ) niche after injury. Involved in determination of left/right symmetry by modulating the balance between motile and immotile (sensory) cilia at the left-right organiser (LRO). In Mus musculus (Mouse), this protein is Neurogenic locus notch homolog protein 1 (Notch1).